The chain runs to 285 residues: Transmembrane protein 53-A (285 aa).

Residues 165-185 (FLALAAFAILVIILRILLYPL) traverse the membrane as a helical segment.

Belongs to the TMEM53 family.

It localises to the nucleus outer membrane. Its function is as follows. Ensures normal bone formation, through the negative regulation of bone morphogenetic protein (BMP) signaling in osteoblast lineage cells by blocking cytoplasm-nucleus translocation of phosphorylated SMAD proteins. The protein is Transmembrane protein 53-A (tmem53-a) of Xenopus laevis (African clawed frog).